The chain runs to 258 residues: Aspartate/glutamate leucyltransferase (258 aa).

The protein belongs to the R-transferase family. Bpt subfamily.

The protein localises to the cytoplasm. The catalysed reaction is N-terminal L-glutamyl-[protein] + L-leucyl-tRNA(Leu) = N-terminal L-leucyl-L-glutamyl-[protein] + tRNA(Leu) + H(+). It carries out the reaction N-terminal L-aspartyl-[protein] + L-leucyl-tRNA(Leu) = N-terminal L-leucyl-L-aspartyl-[protein] + tRNA(Leu) + H(+). Functionally, functions in the N-end rule pathway of protein degradation where it conjugates Leu from its aminoacyl-tRNA to the N-termini of proteins containing an N-terminal aspartate or glutamate. The chain is Aspartate/glutamate leucyltransferase from Rhizobium etli (strain ATCC 51251 / DSM 11541 / JCM 21823 / NBRC 15573 / CFN 42).